Consider the following 366-residue polypeptide: Left-right determination factor 1 (366 aa).

An N-terminal signal peptide occupies residues 1 to 21 (MQPLWLCWALWVLPLASPGAA). The propeptide at 22-76 (LTGEQLLGSLLRQLQLKEVPTLDRADMEELVIPTHVRAQYVALLQRSHGDRSRGK) is or 135. An N-linked (GlcNAc...) asparagine glycan is attached at Asn-158. 4 disulfides stabilise this stretch: Cys-251/Cys-264, Cys-263/Cys-316, Cys-293/Cys-351, and Cys-297/Cys-353.

It belongs to the TGF-beta family. In terms of processing, the processing of the protein may also occur at the second R-X-X-R site located at AA 132-135. Processing appears to be regulated in a cell-type specific manner.

The protein resides in the secreted. Functionally, required for left-right axis determination as a regulator of LEFTY2 and NODAL. In Homo sapiens (Human), this protein is Left-right determination factor 1 (LEFTY1).